We begin with the raw amino-acid sequence, 586 residues long: Dual specificity tyrosine-phosphorylation-regulated kinase 3 (586 aa).

A compositionally biased stretch (basic and acidic residues) spans 1–13 (MGGAARDRGRKDA). Residues 1–187 (MGGAARDRGR…QGVIGGPNNG (187 aa)) are disordered. The region spanning 208–521 (YEVLKIIGKG…PAQALRHPWI (314 aa)) is the Protein kinase domain. Residues 214–222 (IGKGSFGQV), Lys-237, and 287–290 (FELL) contribute to the ATP site. Asp-334 acts as the Proton acceptor in catalysis. The residue at position 368 (Tyr-368) is a Phosphotyrosine. A Nuclear localization signal motif is present at residues 467-480 (RSRRGKKRGPPGSK).

The protein belongs to the protein kinase superfamily. CMGC Ser/Thr protein kinase family. MNB/DYRK subfamily. In terms of assembly, interacts with SIRT1. Mg(2+) serves as cofactor. In terms of processing, ubiquitinated at anaphase by the anaphase-promoting complex (APC/C), leading to its degradation by the proteasome. Protein kinase activity is activated following autophosphorylation at Tyr-368.

The protein localises to the nucleus. Its subcellular location is the cytoplasm. The protein resides in the nucleus speckle. It is found in the cytoplasmic granule. It localises to the cytoskeleton. The protein localises to the microtubule organizing center. Its subcellular location is the centrosome. It catalyses the reaction L-seryl-[protein] + ATP = O-phospho-L-seryl-[protein] + ADP + H(+). The catalysed reaction is L-threonyl-[protein] + ATP = O-phospho-L-threonyl-[protein] + ADP + H(+). It carries out the reaction L-tyrosyl-[protein] + ATP = O-phospho-L-tyrosyl-[protein] + ADP + H(+). Its activity is regulated as follows. Protein kinase activity is activated following autophosphorylation at Tyr-368. In terms of biological role, dual-specificity protein kinase that promotes disassembly of several types of membraneless organelles during mitosis, such as stress granules, nuclear speckles and pericentriolar material. Dual-specificity tyrosine-regulated kinases (DYRKs) autophosphorylate a critical tyrosine residue in their activation loop and phosphorylate their substrate on serine and threonine residues. Acts as a central dissolvase of membraneless organelles during the G2-to-M transition, after the nuclear-envelope breakdown: acts by mediating phosphorylation of multiple serine and threonine residues in unstructured domains of proteins, such as SRRM1 and PCM1. Does not mediate disassembly of all membraneless organelles: disassembly of P-body and nucleolus is not regulated by DYRK3. Dissolution of membraneless organelles at the onset of mitosis is also required to release mitotic regulators, such as ZNF207, from liquid-unmixed organelles where they are sequestered and keep them dissolved during mitosis. Regulates mTORC1 by mediating the dissolution of stress granules: during stressful conditions, DYRK3 partitions from the cytosol to the stress granule, together with mTORC1 components, which prevents mTORC1 signaling. When stress signals are gone, the kinase activity of DYRK3 is required for the dissolution of stress granule and mTORC1 relocation to the cytosol: acts by mediating the phosphorylation of the mTORC1 inhibitor AKT1S1, allowing full reactivation of mTORC1 signaling. Also acts as a negative regulator of EPO-dependent erythropoiesis: may place an upper limit on red cell production during stress erythropoiesis. Inhibits cell death due to cytokine withdrawal in hematopoietic progenitor cells. Promotes cell survival upon genotoxic stress through phosphorylation of SIRT1: this in turn inhibits p53/TP53 activity and apoptosis. The protein is Dual specificity tyrosine-phosphorylation-regulated kinase 3 of Mus musculus (Mouse).